Here is a 142-residue protein sequence, read N- to C-terminus: ATP synthase epsilon chain (142 aa).

It belongs to the ATPase epsilon chain family. In terms of assembly, F-type ATPases have 2 components, CF(1) - the catalytic core - and CF(0) - the membrane proton channel. CF(1) has five subunits: alpha(3), beta(3), gamma(1), delta(1), epsilon(1). CF(0) has three main subunits: a, b and c.

It localises to the cell inner membrane. Its function is as follows. Produces ATP from ADP in the presence of a proton gradient across the membrane. The chain is ATP synthase epsilon chain from Shewanella sp. (strain ANA-3).